We begin with the raw amino-acid sequence, 149 residues long: Large ribosomal subunit protein eL19 (149 aa).

Positions 67 to 90 (KRKLQKRKGRRRGHGSRKGAKGAR) are disordered.

This sequence belongs to the eukaryotic ribosomal protein eL19 family. Part of the 50S ribosomal subunit.

Its function is as follows. Binds to the 23S rRNA. The protein is Large ribosomal subunit protein eL19 of Archaeoglobus fulgidus (strain ATCC 49558 / DSM 4304 / JCM 9628 / NBRC 100126 / VC-16).